The chain runs to 860 residues: Transcription factor E2F8 (860 aa).

Disordered regions lie at residues 1–27 and 38–57; these read MENQ…PSSK and DLGP…GEPW. Serine 71 and serine 102 each carry phosphoserine. 2 consecutive DNA-binding regions follow at residues 113-182 and 261-347; these read RKEK…TWHG and RKDK…KWTG. 3 disordered regions span residues 407-433, 532-616, and 745-803; these read RRKI…PPVP, LTPP…PKED, and QMSA…QPVP. Residues serine 412 and serine 416 each carry the phosphoserine modification. Polar residues-rich tracts occupy residues 412 to 429 and 542 to 554; these read SAPS…SQNS and VCPT…TGSK. Positions 555–565 are enriched in basic and acidic residues; sequence DPTDAPAEKTA.

The protein belongs to the E2F/DP family. As to quaternary structure, interacts with HIF1A. Homodimer and heterodimer: mainly forms homodimers and, to a lesser extent, heterodimers with E2F8. Dimerization is important for DNA-binding. As to expression, highly expressed in liver, skin, thymus and testis. Expressed in trophoblast giant cells throughout placenta development (at protein level).

It is found in the nucleus. Atypical E2F transcription factor that participates in various processes such as angiogenesis and polyploidization of specialized cells. Mainly acts as a transcription repressor that binds DNA independently of DP proteins and specifically recognizes the E2 recognition site 5'-TTTC[CG]CGC-3'. Directly represses transcription of classical E2F transcription factors such as E2F1: component of a feedback loop in S phase by repressing the expression of E2F1, thereby preventing p53/TP53-dependent apoptosis. Plays a key role in polyploidization of cells in placenta and liver by regulating the endocycle, probably by repressing genes promoting cytokinesis and antagonizing action of classical E2F proteins (E2F1, E2F2 and/or E2F3). Required for placental development by promoting polyploidization of trophoblast giant cells. Acts as a promoter of sprouting angiogenesis, possibly by acting as a transcription activator: associates with HIF1A, recognizes and binds the VEGFA promoter, which is different from canonical E2 recognition site, and activates expression of the VEGFA gene. This is Transcription factor E2F8 (E2f8) from Mus musculus (Mouse).